We begin with the raw amino-acid sequence, 94 residues long: Protein S100-A1 (94 aa).

Gly-2 carries the blocked amino end (Gly) modification. EF-hand domains are found at residues 13–48 and 50–85; these read INVF…FLDA and KDAD…LTVA. Residues Lys-28, Glu-33, Asp-63, Asn-65, Asp-67, Glu-69, and Glu-74 each contribute to the Ca(2+) site. Cys-86 carries the S-nitrosocysteine modification.

It belongs to the S-100 family. In terms of assembly, dimer of either two alpha chains, or two beta chains, or one alpha and one beta chain. Also forms heterodimers with S100P. Interacts with AGER. Interacts with CAPZA1. Interacts with FKBP4. Interacts with RYR1 and RYR2. Interacts with CACYBP in a calcium-dependent manner. Interacts with PPP5C (via TPR repeats); the interaction is calcium-dependent and modulates PPP5C activity. Interacts with ATP2A2 and PLN in a Ca(2+)-dependent manner. Interacts with mitochondrial F1-ATPase subunits ATP5F1A and ATP5F1B; these interactions increase F1-ATPase activity. Glutathionylated; glutathionylation increases affinity to calcium about 10-fold. Although predominant among the water-soluble brain proteins, S100 is also found in a variety of other tissues.

Its subcellular location is the cytoplasm. It localises to the sarcoplasmic reticulum. The protein localises to the mitochondrion. Its function is as follows. Small calcium binding protein that plays important roles in several biological processes such as Ca(2+) homeostasis, chondrocyte biology and cardiomyocyte regulation. In response to an increase in intracellular Ca(2+) levels, binds calcium which triggers conformational changes. These changes allow interactions with specific target proteins and modulate their activity. Regulates a network in cardiomyocytes controlling sarcoplasmic reticulum Ca(2+) cycling and mitochondrial function through interaction with the ryanodine receptors RYR1 and RYR2, sarcoplasmic reticulum Ca(2+)-ATPase/ATP2A2 and mitochondrial F1-ATPase. Facilitates diastolic Ca(2+) dissociation and myofilament mechanics in order to improve relaxation during diastole. This chain is Protein S100-A1 (S100A1), found in Bos taurus (Bovine).